A 744-amino-acid polypeptide reads, in one-letter code: Catalase A (744 aa).

Catalysis depends on residues histidine 93 and asparagine 166. Tyrosine 380 contacts heme.

The protein belongs to the catalase family. Heme is required as a cofactor.

It localises to the peroxisome matrix. It catalyses the reaction 2 H2O2 = O2 + 2 H2O. Its function is as follows. Catalyzes the degradation of hydrogen peroxide (H(2)O(2)) generated by peroxisomal oxidases to water and oxygen, thereby protecting cells from the toxic effects of hydrogen peroxide. The polypeptide is Catalase A (catA) (Emericella nidulans (strain FGSC A4 / ATCC 38163 / CBS 112.46 / NRRL 194 / M139) (Aspergillus nidulans)).